We begin with the raw amino-acid sequence, 61 residues long: Protein TfaX (61 aa).

This sequence belongs to the tfa family.

Might play a role in cell growth during glycolysis. This Escherichia coli (strain K12) protein is Protein TfaX (tfaX).